We begin with the raw amino-acid sequence, 327 residues long: Pumilio homolog 18 (327 aa).

The PUM-HD domain maps to 1–324; sequence MAVADNPFSM…NIANILDSFR (324 aa). Pumilio repeat units follow at residues 79-114, 115-149, 150-185, 186-222, 223-260, and 261-295; these read SDSD…FCAA, ILRR…ALYE, RILY…DQLL, ELVA…NIAV, NLYG…ELLG, and CDGD…DLFW.

It is found in the cytoplasm. Its function is as follows. Sequence-specific RNA-binding protein that regulates translation and mRNA stability by binding the 3'-UTR of target mRNAs. In Arabidopsis thaliana (Mouse-ear cress), this protein is Pumilio homolog 18 (APUM18).